The following is a 342-amino-acid chain: Dihydroorotate dehydrogenase (quinone) (342 aa).

FMN-binding positions include 61-65 (AGLDK) and T85. K65 serves as a coordination point for substrate. 110–114 (NRMGF) is a binding site for substrate. Residues N138 and N171 each contribute to the FMN site. N171 provides a ligand contact to substrate. S174 acts as the Nucleophile in catalysis. Residue N176 coordinates substrate. Positions 216 and 244 each coordinate FMN. 245–246 (NT) contacts substrate. FMN is bound by residues G267, G296, and 317-318 (YS).

It belongs to the dihydroorotate dehydrogenase family. Type 2 subfamily. As to quaternary structure, monomer. It depends on FMN as a cofactor.

Its subcellular location is the cell membrane. It catalyses the reaction (S)-dihydroorotate + a quinone = orotate + a quinol. It participates in pyrimidine metabolism; UMP biosynthesis via de novo pathway; orotate from (S)-dihydroorotate (quinone route): step 1/1. Catalyzes the conversion of dihydroorotate to orotate with quinone as electron acceptor. The protein is Dihydroorotate dehydrogenase (quinone) of Pseudomonas aeruginosa (strain UCBPP-PA14).